A 406-amino-acid chain; its full sequence is UPF0754 membrane protein CYB_2931 (406 aa).

The next 2 membrane-spanning stretches (helical) occupy residues 1 to 21 (MAFW…YFTN) and 385 to 405 (IVNL…LFLL).

The protein belongs to the UPF0754 family.

The protein resides in the cell inner membrane. The polypeptide is UPF0754 membrane protein CYB_2931 (Synechococcus sp. (strain JA-2-3B'a(2-13)) (Cyanobacteria bacterium Yellowstone B-Prime)).